The following is an 800-amino-acid chain: Phenylalanine--tRNA ligase beta subunit (800 aa).

A tRNA-binding domain is found at 39–152 (AAGLSKIVVG…EDAVPGEEVF (114 aa)). Residues 405–480 (TSDVEVSSTL…RIYGYDRLPT (76 aa)) form the B5 domain. Positions 458, 464, 467, and 468 each coordinate Mg(2+). Residues 707–800 (TKFPAVSRDV…LEEKVNAEVR (94 aa)) enclose the FDX-ACB domain.

It belongs to the phenylalanyl-tRNA synthetase beta subunit family. Type 1 subfamily. As to quaternary structure, tetramer of two alpha and two beta subunits. Mg(2+) is required as a cofactor.

The protein resides in the cytoplasm. It carries out the reaction tRNA(Phe) + L-phenylalanine + ATP = L-phenylalanyl-tRNA(Phe) + AMP + diphosphate + H(+). The protein is Phenylalanine--tRNA ligase beta subunit of Streptococcus pneumoniae (strain ATCC BAA-255 / R6).